The sequence spans 305 residues: UDP-3-O-acyl-N-acetylglucosamine deacetylase (305 aa).

Residues His78, His237, and Asp241 each contribute to the Zn(2+) site. His264 functions as the Proton donor in the catalytic mechanism.

Belongs to the LpxC family. Zn(2+) serves as cofactor.

It catalyses the reaction a UDP-3-O-[(3R)-3-hydroxyacyl]-N-acetyl-alpha-D-glucosamine + H2O = a UDP-3-O-[(3R)-3-hydroxyacyl]-alpha-D-glucosamine + acetate. Its pathway is glycolipid biosynthesis; lipid IV(A) biosynthesis; lipid IV(A) from (3R)-3-hydroxytetradecanoyl-[acyl-carrier-protein] and UDP-N-acetyl-alpha-D-glucosamine: step 2/6. Catalyzes the hydrolysis of UDP-3-O-myristoyl-N-acetylglucosamine to form UDP-3-O-myristoylglucosamine and acetate, the committed step in lipid A biosynthesis. In Burkholderia thailandensis (strain ATCC 700388 / DSM 13276 / CCUG 48851 / CIP 106301 / E264), this protein is UDP-3-O-acyl-N-acetylglucosamine deacetylase.